The primary structure comprises 316 residues: Ribosomal RNA small subunit methyltransferase H (316 aa).

S-adenosyl-L-methionine-binding positions include 35-37 (SGH), Asp55, Phe84, Asp105, and Gln112.

Belongs to the methyltransferase superfamily. RsmH family.

Its subcellular location is the cytoplasm. The enzyme catalyses cytidine(1402) in 16S rRNA + S-adenosyl-L-methionine = N(4)-methylcytidine(1402) in 16S rRNA + S-adenosyl-L-homocysteine + H(+). In terms of biological role, specifically methylates the N4 position of cytidine in position 1402 (C1402) of 16S rRNA. The sequence is that of Ribosomal RNA small subunit methyltransferase H from Streptococcus dysgalactiae subsp. equisimilis (strain GGS_124).